We begin with the raw amino-acid sequence, 111 residues long: Dynein light chain Tctex-type (111 aa).

The protein belongs to the dynein light chain Tctex-type family.

It localises to the cytoplasm. The protein resides in the cytoskeleton. Functionally, acts as a non-catalytic accessory component of a dynein complex. This Dictyostelium discoideum (Social amoeba) protein is Dynein light chain Tctex-type (dlcA).